The chain runs to 89 residues: Small ribosomal subunit protein uS15 (89 aa).

The protein belongs to the universal ribosomal protein uS15 family. Part of the 30S ribosomal subunit. Forms a bridge to the 50S subunit in the 70S ribosome, contacting the 23S rRNA.

Functionally, one of the primary rRNA binding proteins, it binds directly to 16S rRNA where it helps nucleate assembly of the platform of the 30S subunit by binding and bridging several RNA helices of the 16S rRNA. Its function is as follows. Forms an intersubunit bridge (bridge B4) with the 23S rRNA of the 50S subunit in the ribosome. This Magnetococcus marinus (strain ATCC BAA-1437 / JCM 17883 / MC-1) protein is Small ribosomal subunit protein uS15.